A 4644-amino-acid polypeptide reads, in one-letter code: Cytoplasmic dynein 1 heavy chain 1 (4644 aa).

Serine 2 is subject to N-acetylserine. The tract at residues 2–1865 (SEPGGGEDGS…SIQMANAKFN (1864 aa)) is stem. Coiled coils occupy residues 48-69 (AALEAALEEKSALEQMRKFLSD), 179-200 (SVEKKIAELEMGLLHLQQNIEI), 453-476 (AHRKLQARLDQMRKFRRQHEQLRA), and 541-564 (TEAWEAAMKRYDERIDRVETRITA). Residue serine 68 is modified to Phosphoserine. Residues 446 to 701 (MVWRINPAHR…NTQEIFDDWA (256 aa)) form an interaction with DYNC1I2 region. The tract at residues 649–800 (AKQIDRQLTA…EKVEERNTIS (152 aa)) is interaction with DYNC1LI2. An N6-acetyllysine modification is found at lysine 1123. A coiled-coil region spans residues 1169–1201 (TYVQSLKRKIKQFEKQVELYRNGQRLLEKQRFQ). Phosphoserine is present on serine 1228. 2 coiled-coil regions span residues 1229–1250 (AIQQQVANLQMKIVQEDRAVES) and 1355–1371 (RKLRQNLDGLLNQLKNF). 4 AAA regions span residues 1866–2097 (YGFE…VLVS), 2178–2450 (EELK…LTRL), 2554–2803 (EVET…WVRG), and 2897–3166 (VFYE…GGRT). Residues 1904–1911 (GPAGTGKT) and 2222–2229 (GPSGSGKS) each bind ATP. Residues 2388–2408 (GEDEAQRRRKGKEDEGEEAAS) are disordered. ATP-binding positions include 2593–2600 (GPPGSGKT) and 2935–2942 (GVSGAGKT). Coiled coils occupy residues 3187–3273 (EKRS…ADKQ), 3394–3498 (AIAQ…KNQM), and 3735–3798 (EFQL…VSQQ). The stalk stretch occupies residues 3187–3498 (EKRSELEEQQ…KTSETFKNQM (312 aa)). Position 3478 is an N6-acetyllysine (lysine 3478). AAA regions lie at residues 3551 to 3780 (LSNA…EVTR) and 4003 to 4219 (AHMF…TVDT). Position 4160 is a phosphoserine (serine 4160). Lysine 4281 bears the N6-acetyllysine mark. At threonine 4364 the chain carries Phosphothreonine. Serine 4366 bears the Phosphoserine mark.

Belongs to the dynein heavy chain family. Homodimer. The cytoplasmic dynein 1 complex consists of two catalytic heavy chains (HCs) and a number of non-catalytic subunits presented by intermediate chains (ICs), light intermediate chains (LICs) and light chains (LCs); the composition seems to vary in respect to the IC, LIC and LC composition. The heavy chain homodimer serves as a scaffold for the probable homodimeric assembly of the respective non-catalytic subunits. The ICs and LICs bind directly to the HC dimer and dynein LCs assemble on the IC dimer. Interacts with DYNC1LI1; DYNC1LI1 and DYNC1LI2 bind mutually exclusive to DYNC1H1. Interacts with DYNC1LI2; DYNC1LI1 and DYNC1LI2 bind mutually exclusive to DYNC1H1. Interacts with DYNC1I2. Interacts with BICD2. Interacts with DNALI1.

The protein localises to the cytoplasm. The protein resides in the cytoskeleton. Cytoplasmic dynein 1 acts as a motor for the intracellular retrograde motility of vesicles and organelles along microtubules. Dynein has ATPase activity; the force-producing power stroke is thought to occur on release of ADP. Plays a role in mitotic spindle assembly and metaphase plate congression. The chain is Cytoplasmic dynein 1 heavy chain 1 (Dync1h1) from Mus musculus (Mouse).